A 507-amino-acid polypeptide reads, in one-letter code: Arylsulfatase A (507 aa).

The signal sequence occupies residues 1–18 (MEALWTLTLALAAGLAAA). 3 residues coordinate Ca(2+): Asp29, Asp30, and Cys69. Catalysis depends on Cys69, which acts as the Nucleophile. Position 69 is a 3-oxoalanine (Cys) (Cys69). Lys123 is a substrate binding site. His125 is a catalytic residue. Ser150 contacts substrate. Cystine bridges form between Cys156–Cys172 and Cys161–Cys168. Asn158 carries N-linked (GlcNAc...) asparagine glycosylation. Asn184 carries N-linked (GlcNAc...) asparagine glycosylation. Substrate is bound at residue His229. Residues Asp281 and Asn282 each coordinate Ca(2+). 4 cysteine pairs are disulfide-bonded: Cys300–Cys414, Cys488–Cys500, Cys489–Cys502, and Cys493–Cys499. A substrate-binding site is contributed by Lys302. Residue Asn350 is glycosylated (N-linked (GlcNAc...) asparagine).

It belongs to the sulfatase family. Homodimer at neutral pH and homooctamer at acidic pH. Exists both as a single chain of 58 kDa (component A) or as a chain of 50 kDa (component B) linked by disulfide bond(s) to a 7 kDa chain (component C). Interacts with SUMF1. Ca(2+) is required as a cofactor. The conversion to 3-oxoalanine (also known as C-formylglycine, FGly), of a serine or cysteine residue in prokaryotes and of a cysteine residue in eukaryotes, is critical for catalytic activity. This post-translational modification is severely defective in multiple sulfatase deficiency (MSD).

Its subcellular location is the endoplasmic reticulum. It is found in the lysosome. The enzyme catalyses an N-acyl-1-beta-D-(3-O-sulfo)-galactosyl-sphing-4-enine + H2O = a beta-D-galactosyl-(1&lt;-&gt;1')-N-acylsphing-4-enine + sulfate + H(+). Hydrolyzes cerebroside sulfate. This Bos taurus (Bovine) protein is Arylsulfatase A (ARSA).